We begin with the raw amino-acid sequence, 436 residues long: Adenosylmethionine-8-amino-7-oxononanoate aminotransferase (436 aa).

Trp56 contributes to the substrate binding site. 114–115 is a binding site for pyridoxal 5'-phosphate; it reads GS. A substrate-binding site is contributed by Tyr148. Pyridoxal 5'-phosphate is bound at residue Asp245. Substrate contacts are provided by Lys274, Ser309, and Arg400. Position 274 is an N6-(pyridoxal phosphate)lysine (Lys274).

Belongs to the class-III pyridoxal-phosphate-dependent aminotransferase family. BioA subfamily. As to quaternary structure, homodimer. Pyridoxal 5'-phosphate is required as a cofactor.

It is found in the cytoplasm. It carries out the reaction (8S)-8-amino-7-oxononanoate + S-adenosyl-L-methionine = S-adenosyl-4-methylsulfanyl-2-oxobutanoate + (7R,8S)-7,8-diammoniononanoate. Its pathway is cofactor biosynthesis; biotin biosynthesis; 7,8-diaminononanoate from 8-amino-7-oxononanoate (SAM route): step 1/1. In terms of biological role, catalyzes the transfer of the alpha-amino group from S-adenosyl-L-methionine (SAM) to 7-keto-8-aminopelargonic acid (KAPA) to form 7,8-diaminopelargonic acid (DAPA). It is the only aminotransferase known to utilize SAM as an amino donor. In Helicobacter pylori (strain ATCC 700392 / 26695) (Campylobacter pylori), this protein is Adenosylmethionine-8-amino-7-oxononanoate aminotransferase.